Reading from the N-terminus, the 201-residue chain is Small ribosomal subunit protein uS4 (201 aa).

Residues 21-43 are disordered; the sequence is GTGKELNRRPYAPGDHGQGRRQK. One can recognise an S4 RNA-binding domain in the interval 93-153; sequence RRLDNMVYRL…EKSKDMAIIK (61 aa).

This sequence belongs to the universal ribosomal protein uS4 family. Part of the 30S ribosomal subunit. Contacts protein S5. The interaction surface between S4 and S5 is involved in control of translational fidelity.

One of the primary rRNA binding proteins, it binds directly to 16S rRNA where it nucleates assembly of the body of the 30S subunit. In terms of biological role, with S5 and S12 plays an important role in translational accuracy. The protein is Small ribosomal subunit protein uS4 of Levilactobacillus brevis (strain ATCC 367 / BCRC 12310 / CIP 105137 / JCM 1170 / LMG 11437 / NCIMB 947 / NCTC 947) (Lactobacillus brevis).